The following is a 1309-amino-acid chain: Clustered mitochondria protein homolog (1309 aa).

The segment at 1-34 (MLLNGDCPESLKKEAAAAEPPRENGLDEAGPGDE) is disordered. Basic and acidic residues predominate over residues 9–25 (ESLKKEAAAAEPPRENG). Phosphoserine is present on residues Ser279 and Ser281. One can recognise a Clu domain in the interval 335–577 (RAEDAYTSRL…RTFPPDLNFL (243 aa)). Residues 636–651 (LETPSSLENGGPSSLE) show a composition bias toward polar residues. Residues 636-674 (LETPSSLENGGPSSLESKSEDPPGQEAGSEEEGSSASGL) form a disordered region. 3 positions are modified to phosphoserine: Ser654, Ser664, and Ser723. TPR repeat units lie at residues 978-1011 (AFHFFQSGQAKVQQGFLKEGCELINEALNLFNNV), 1020-1053 (CACLRLLARLHYIMGDYAEALSNQQKAVLMSERV), 1104-1137 (ALLDNNIGLVLHGVMEYDLSLRFLENALAVSTKY), and 1146-1179 (ALSHHLVARVYESKAEFRSALQHEKEGYTIYKTQ). Residues 1264–1278 (HQLQEASRNRDRAEE) show a composition bias toward basic and acidic residues. The disordered stretch occupies residues 1264–1309 (HQLQEASRNRDRAEEPMATEPAPAGAPGDLGSQPPAAKDPSPSVQG). A compositionally biased stretch (low complexity) spans 1279–1290 (PMATEPAPAGAP).

This sequence belongs to the CLU family.

It is found in the cytoplasm. The protein resides in the cytoplasmic granule. Its function is as follows. mRNA-binding protein involved in proper cytoplasmic distribution of mitochondria. Specifically binds mRNAs of nuclear-encoded mitochondrial proteins in the cytoplasm and regulates transport or translation of these transcripts close to mitochondria, playing a role in mitochondrial biogenesis. This chain is Clustered mitochondria protein homolog (CLUH), found in Homo sapiens (Human).